Consider the following 527-residue polypeptide: MADSRDPASDQMKHWKEERAAQKPDVLTTAGGNPVGDKLNIMTVGPRGPLLVQDVVFTDEMAHFDRERIPERVVHAKGAGAFAYFEVTHDITKYCKAKVFEHIGKKTPIAVRFSTVAGESGSADTVRDPRGFAVKFYTEEGIWDLVGNNTPIFFIRDALLFPSFIHSQKRNPQTHLKDPDMMWDFWSLRPESLHQVSFLFSDRGIPDGHRHMNGYGSHTFKLVNGSGEAVYCKFHYKTDQGIKNLSVEDAARLSQEDPDYGLRDLFNAIATGNYPSWTLYIQVMTFQQAQSFPFNPFDLTKIWPHKDYPLIPVGKLVLNRNPVNYFAEVEQIAFDPSNMPPGIEPSPDKMLQGRLFAYPDTHRHRLGPNYLQIPVNCPYRTRVANYQRDGPMCVTDNQGGAPNYYPNSFSAPVEQRQALEHTSRCSGDVGRYNSTDDDNVTQVRAFYTQVLNEEQRRRLCENIAGHLKDAQLFIQKKAVKNFMDVHPDYGNRIQTLLDKYNVEKPKNAIHTFVQDGSHLSAKEKANL.

Positions 1-22 (MADSRDPASDQMKHWKEERAAQ) are enriched in basic and acidic residues. The tract at residues 1-32 (MADSRDPASDQMKHWKEERAAQKPDVLTTAGG) is disordered. Alanine 2 is modified (N-acetylalanine). Serine 9 bears the Phosphoserine mark. Lysine 13 carries the N6-succinyllysine modification. Residues histidine 75 and asparagine 148 contribute to the active site. NADP(+) is bound by residues histidine 194, serine 201, arginine 203, and asparagine 213. Lysine 221 carries the N6-succinyllysine modification. Position 233 is an N6-acetyllysine (lysine 233). NADP(+) is bound by residues lysine 237, tryptophan 303, histidine 305, and lysine 306. N6-acetyllysine; alternate is present on lysine 306. Lysine 306 carries the post-translational modification N6-succinyllysine; alternate. Heme is bound at residue tyrosine 358. Residue serine 434 is modified to Phosphoserine. At lysine 480 the chain carries N6-acetyllysine; alternate. N6-succinyllysine; alternate is present on lysine 480. The residue at position 499 (lysine 499) is an N6-acetyllysine. Threonine 511 is subject to Phosphothreonine. Serine 517 bears the Phosphoserine mark. Lysine 522 is subject to N6-succinyllysine. Positions 524–527 (KANL) match the Microbody targeting signal; atypical motif.

This sequence belongs to the catalase family. In terms of assembly, homotetramer. Interacts (via microbody targeting signal) with PEX5, monomeric form interacts with PEX5, leading to its translocation into peroxisomes. Requires heme as cofactor. The cofactor is NADP(+).

Its subcellular location is the peroxisome matrix. It catalyses the reaction 2 H2O2 = O2 + 2 H2O. Its function is as follows. Catalyzes the degradation of hydrogen peroxide (H(2)O(2)) generated by peroxisomal oxidases to water and oxygen, thereby protecting cells from the toxic effects of hydrogen peroxide. Promotes growth of cells including T-cells, B-cells, myeloid leukemia cells, melanoma cells, mastocytoma cells and normal and transformed fibroblast cells. This chain is Catalase (CAT), found in Cavia porcellus (Guinea pig).